Reading from the N-terminus, the 929-residue chain is Diacylglycerol kinase zeta (929 aa).

Positions 1 to 14 are enriched in basic and acidic residues; it reads MEPRDPSPEARSSD. 2 disordered regions span residues 1–46 and 59–80; these read MEPR…RRFP and KSGLQHLAPPPPTPGAPCGESE. Over residues 15–24 the composition is skewed to low complexity; it reads SESASASSSG. Basic and acidic residues predominate over residues 25-37; that stretch reads SERDADPEPDKAP. 2 Phorbol-ester/DAG-type zinc fingers span residues 98–153 and 173–231; these read HIWF…NFRC and HHWV…EEPC. The tract at residues 257–281 is disordered; that stretch reads KASKKKKRASFKRRSSKKGPEEGRW. The span at 258-273 shows a compositional bias: basic residues; sequence ASKKKKRASFKRRSSK. The segment at 279-417 is mediates interaction with RASGRP1; it reads GRWRPFIIRP…HVEEGNVVQL (139 aa). Residues 292 to 426 enclose the DAGKc domain; it reads PLMKPLLVFV…LDRWDLRAEP (135 aa). The Nuclear export signal signature appears at 362–370; it reads LSTLDQLRL. Residues 421-441 are disordered; that stretch reads DLRAEPNPEAGPEERDDGATD. At S706 the chain carries Phosphoserine. The tract at residues 760–783 is disordered; the sequence is ARPDLPTPTSPLPASPCSPTPGSL. Positions 764-778 are enriched in pro residues; it reads LPTPTSPLPASPCSP. S782 is modified (phosphoserine). 2 ANK repeats span residues 823 to 853 and 858 to 887; these read QSRTLLHHAVSTGSKEVVRYLLDHAPPEILD and NGETCLHQAAALGQRTICHYIVEAGASLMK. Positions 925–929 match the PDZ-binding motif; the sequence is QETAV.

The protein belongs to the eukaryotic diacylglycerol kinase family. In terms of assembly, interacts (via PDZ-binding motif) with the PDZ domain of the syntrophin SNTG1 and that of SNX27. Interacts with IRS1 in the absence of insulin; insulin stimulation decreases this interaction. Found in a ternary complex with IRS1 and PIP5K1A in the absence of insulin. Interacts with PIP5K1A. Forms a signaling complex with RASGRP1 and HRAS.

Its subcellular location is the nucleus. The protein localises to the cytoplasm. It localises to the cytosol. It is found in the cell membrane. The protein resides in the cell projection. Its subcellular location is the lamellipodium. The enzyme catalyses a 1,2-diacyl-sn-glycerol + ATP = a 1,2-diacyl-sn-glycero-3-phosphate + ADP + H(+). It carries out the reaction a 1-O-alkyl-sn-glycerol + ATP = a 1-O-alkyl-sn-glycero-3-phosphate + ADP + H(+). It catalyses the reaction 1-O-alkyl-2-acyl-sn-glycerol + ATP = 1-O-alkyl-2-acyl-sn-glycero-3-phosphate + ADP + H(+). The catalysed reaction is 1,2-didecanoyl-sn-glycerol + ATP = 1,2-didecanoyl-sn-glycero-3-phosphate + ADP + H(+). The enzyme catalyses 1,2-ditetradecanoyl-sn-glycerol + ATP = 1,2-ditetradecanoyl-sn-glycero-3-phosphate + ADP + H(+). It carries out the reaction 1-hexadecanoyl-2-(9Z-octadecenoyl)-sn-glycerol + ATP = 1-hexadecanoyl-2-(9Z-octadecenoyl)-sn-glycero-3-phosphate + ADP + H(+). It catalyses the reaction 1-hexadecanoyl-2-(5Z,8Z,11Z,14Z-eicosatetraenoyl)-sn-glycerol + ATP = 1-hexadecanoyl-2-(5Z,8Z,11Z,14Z-eicosatetraenoyl)-sn-glycero-3-phosphate + ADP + H(+). The catalysed reaction is 1-octadecanoyl-2-(9Z-octadecenoyl)-sn-glycerol + ATP = 1-octadecanoyl-2-(9Z-octadecenoyl)-sn-glycero-3-phosphate + ADP + H(+). The enzyme catalyses 1-octadecanoyl-2-(5Z,8Z,11Z,14Z-eicosatetraenoyl)-sn-glycerol + ATP = 1-octadecanoyl-2-(5Z,8Z,11Z,14Z-eicosatetraenoyl)-sn-glycero-3-phosphate + ADP + H(+). It carries out the reaction 1-octadecanoyl-2-(4Z,7Z,10Z,13Z,16Z,19Z-docosahexaenoyl)-sn-glycerol + ATP = 1-octadecanoyl-2-(4Z,7Z,10Z,13Z,16Z,19Z-docosahexaenoyl)-sn-glycero-3-phosphate + ADP + H(+). It catalyses the reaction 1,2-di-(9Z-octadecenoyl)-sn-glycerol + ATP = 1,2-di-(9Z-octadecenoyl)-sn-glycero-3-phosphate + ADP + H(+). The catalysed reaction is 1-(9Z-octadecenoyl)-2-hexadecanoyl-sn-glycerol + ATP = 1-(9Z)-octadecenoyl-2-hexadecanoyl-sn-glycero-3-phosphate + ADP + H(+). The enzyme catalyses 1-eicosanoyl-2-(5Z,8Z,11Z,14Z)-eicosatetraenoyl-sn-glycerol + ATP = 1-eicosanoyl-2-(5Z,8Z,11Z,14Z)-eicosatetraenoyl-sn-glycero-3-phosphate + ADP + H(+). It carries out the reaction 1,2-di-(5Z,8Z,11Z,14Z)-eicosatetraenoyl-sn-glycerol + ATP = 1,2-di-(5Z,8Z,11Z,14Z)-eicosatetraenoyl-sn-glycero-3-phosphate + ADP + H(+). It catalyses the reaction 1-O-hexadecyl-2-acetyl-sn-glycerol + ATP = 1-O-hexadecyl-2-acetyl-sn-glycero-3-phosphate + ADP + H(+). The catalysed reaction is 1-O-hexadecyl-2-(5Z,8Z,11Z,14Z-eicosatetraenoyl)-sn-glycerol + ATP = 1-O-hexadecyl-2-(5Z,8Z,11Z,14Z-eicosatetraenoyl)-sn-glycero-3-phosphate + ADP + H(+). The enzyme catalyses 1-O-hexadecyl-2-(9Z-octadecenoyl)-sn-glycerol + ATP = 1-O-hexadecyl-2-(9Z-octadecenoyl)-sn-glycero-3-phosphate + ADP + H(+). It carries out the reaction 1-O-hexadecyl-sn-glycerol + ATP = 1-O-hexadecyl-sn-glycero-3-phosphate + ADP + H(+). It functions in the pathway lipid metabolism; glycerolipid metabolism. In terms of biological role, diacylglycerol kinase that converts diacylglycerol/DAG into phosphatidic acid/phosphatidate/PA and regulates the respective levels of these two bioactive lipids. Thereby, acts as a central switch between the signaling pathways activated by these second messengers with different cellular targets and opposite effects in numerous biological processes. Also plays an important role in the biosynthesis of complex lipids. Does not exhibit an acyl chain-dependent substrate specificity among diacylglycerol species. Can also phosphorylate 1-alkyl-2-acylglycerol in vitro but less efficiently and with a preference for alkylacylglycerols containing an arachidonoyl group. The biological processes it is involved in include T cell activation since it negatively regulates T-cell receptor signaling which is in part mediated by diacylglycerol. By generating phosphatidic acid, stimulates PIP5KIA activity which regulates actin polymerization. Through the same mechanism could also positively regulate insulin-induced translocation of SLC2A4 to the cell membrane. Regulates RASGRP1 activity. The chain is Diacylglycerol kinase zeta from Rattus norvegicus (Rat).